Consider the following 396-residue polypeptide: KiSS-1 receptor (396 aa).

The Extracellular portion of the chain corresponds to 1-43 (MATEATLAPNVTWWAPSNASGCPGCGVNASDDPGSAPRPLDAW). Asn-10, Asn-18, and Asn-28 each carry an N-linked (GlcNAc...) asparagine glycan. Residues 44–66 (LVPLFFATLMLLGLVGNSLVIYV) form a helical membrane-spanning segment. Residues 67 to 78 (ICRHKHMQTVTN) lie on the Cytoplasmic side of the membrane. The helical transmembrane segment at 79-101 (FYIANLAATDVTFLLCCVPFTAL) threads the bilayer. Residues 102 to 116 (LYPLPAWVLGDFMCK) are Extracellular-facing. Cys-115 and Cys-191 form a disulfide bridge. Residues 117–138 (FVNYIQQVSVQATCATLTAMSV) form a helical membrane-spanning segment. At 139 to 157 (DRWYVTVFPLRALHRRTPR) the chain is on the cytoplasmic side. The chain crosses the membrane as a helical span at residues 158–180 (LALAVSLSIWVGSAAVSAPVLAL). Topologically, residues 181–203 (HRLSPGPRTYCSEAFPSRALERA) are extracellular. A helical transmembrane segment spans residues 204 to 224 (FALYNLLALYLLPLLATCACY). The Cytoplasmic segment spans residues 225 to 260 (GAMLRHLGRAAVRPAPTDGALQGQLLAQRAGAVRTK). A helical membrane pass occupies residues 261–283 (VSRLVAAVVLLFAACWGPIQLFL). The Extracellular portion of the chain corresponds to 284 to 305 (VLQALGPSGAWHPRSYAAYAVK). The helical transmembrane segment at 306 to 330 (IWAHCMSYSNSALNPLLYAFLGSHF) threads the bilayer. Residues 331–396 (RQAFCRVCPC…CAQSERTASL (66 aa)) lie on the Cytoplasmic side of the membrane. Residues 349 to 396 (HTSAHSDRAATHTVPHSRAAHPVRIRSPEPGNPVVRSPCAQSERTASL) are disordered. Positions 387–396 (CAQSERTASL) are enriched in polar residues.

This sequence belongs to the G-protein coupled receptor 1 family. Highest level in the heart and 15- and 17-day embryos. Low level in other tissues. Colocalized with gonadotropin-releasing hormone (GnRH) neurons in the hypothalamus.

Its subcellular location is the cell membrane. Functionally, receptor for metastin (kisspeptin-52 or kp-52), a C-terminally amidated peptide of KiSS1. KiSS1 is a metastasis suppressor protein. Activation of the receptor inhibits cell proliferation and cell migration, key characteristics of tumor metastasis. The receptor is essential for normal gonadotropin-released hormone physiology and for puberty. The hypothalamic KiSS1/KISS1R system is a pivotal factor in central regulation of the gonadotropic axis at puberty and in adulthood. Analysis of the transduction pathways activated by the receptor identifies coupling to phospholipase C and intracellular calcium release through pertussis toxin-insensitive G(q) proteins. The sequence is that of KiSS-1 receptor (Kiss1r) from Mus musculus (Mouse).